Consider the following 206-residue polypeptide: Protein GrpE (206 aa).

Positions 1–18 are enriched in basic and acidic residues; it reads MNNEDKKLQDEQLQKETV. The segment at 1 to 21 is disordered; the sequence is MNNEDKKLQDEQLQKETVEAA.

This sequence belongs to the GrpE family. Homodimer.

The protein resides in the cytoplasm. Its function is as follows. Participates actively in the response to hyperosmotic and heat shock by preventing the aggregation of stress-denatured proteins, in association with DnaK and GrpE. It is the nucleotide exchange factor for DnaK and may function as a thermosensor. Unfolded proteins bind initially to DnaJ; upon interaction with the DnaJ-bound protein, DnaK hydrolyzes its bound ATP, resulting in the formation of a stable complex. GrpE releases ADP from DnaK; ATP binding to DnaK triggers the release of the substrate protein, thus completing the reaction cycle. Several rounds of ATP-dependent interactions between DnaJ, DnaK and GrpE are required for fully efficient folding. The chain is Protein GrpE from Photobacterium profundum (strain SS9).